Reading from the N-terminus, the 458-residue chain is UPF0210 protein Maeo_1412 (458 aa).

The protein belongs to the UPF0210 family.

The protein is UPF0210 protein Maeo_1412 of Methanococcus aeolicus (strain ATCC BAA-1280 / DSM 17508 / OCM 812 / Nankai-3).